Here is a 155-residue protein sequence, read N- to C-terminus: Transcriptional repressor NrdR (155 aa).

A zinc finger spans residues 3–34 (CPKCDHNGTRVLDSRPVQDHYSIRRRRECEKC). In terms of domain architecture, ATP-cone spans 49-139 (LIIVKKDGNR…VYRQFKDITV (91 aa)).

The protein belongs to the NrdR family. The cofactor is Zn(2+).

In terms of biological role, negatively regulates transcription of bacterial ribonucleotide reductase nrd genes and operons by binding to NrdR-boxes. The sequence is that of Transcriptional repressor NrdR from Exiguobacterium sp. (strain ATCC BAA-1283 / AT1b).